A 221-amino-acid polypeptide reads, in one-letter code: Probable lipoprotein CT_734 (221 aa).

Residues 1 to 24 form the signal peptide; sequence MKKFIYKYSFGALLLLSGLSGLSS. C25 is lipidated: N-palmitoyl cysteine. A lipid anchor (S-diacylglycerol cysteine) is attached at C25.

The protein belongs to the chlamydial CPn_0875/CT_734/TC_0107 family.

It is found in the cell membrane. This chain is Probable lipoprotein CT_734, found in Chlamydia trachomatis serovar D (strain ATCC VR-885 / DSM 19411 / UW-3/Cx).